The following is a 296-amino-acid chain: NAD kinase (296 aa).

Residue Asp72 is the Proton acceptor of the active site. NAD(+) is bound by residues 72-73 (DG), 146-147 (ND), Arg157, Lys174, Asp176, 187-192 (TAYALS), and Gln247.

This sequence belongs to the NAD kinase family. A divalent metal cation serves as cofactor.

It localises to the cytoplasm. The enzyme catalyses NAD(+) + ATP = ADP + NADP(+) + H(+). Its function is as follows. Involved in the regulation of the intracellular balance of NAD and NADP, and is a key enzyme in the biosynthesis of NADP. Catalyzes specifically the phosphorylation on 2'-hydroxyl of the adenosine moiety of NAD to yield NADP. The sequence is that of NAD kinase from Pseudomonas syringae pv. syringae (strain B728a).